The following is a 388-amino-acid chain: Processive diacylglycerol beta-glucosyltransferase (388 aa).

It belongs to the glycosyltransferase 28 family. UgtP subfamily.

Its subcellular location is the cell membrane. The enzyme catalyses a 1,2-diacyl-3-O-(beta-D-glucopyranosyl)-sn-glycerol + UDP-alpha-D-glucose = a 1,2-diacyl-3-O-(beta-D-Glc-(1-&gt;6)-beta-D-Glc)-sn-glycerol + UDP + H(+). It carries out the reaction a 1,2-diacyl-3-O-(beta-D-Glc-(1-&gt;6)-beta-D-Glc)-sn-glycerol + UDP-alpha-D-glucose = a 1,2-diacyl-3-O-(beta-D-Glc-(1-&gt;6)-beta-D-Glc-(1-&gt;6)-beta-D-Glc)-sn-glycerol + UDP + H(+). The catalysed reaction is a 1,2-diacyl-sn-glycerol + UDP-alpha-D-glucose = a 1,2-diacyl-3-O-(beta-D-glucopyranosyl)-sn-glycerol + UDP + H(+). It participates in glycolipid metabolism; diglucosyl-diacylglycerol biosynthesis. In terms of biological role, processive glucosyltransferase involved in the biosynthesis of both the bilayer- and non-bilayer-forming membrane glucolipids. Is able to successively transfer up to three glucosyl residues to diacylglycerol (DAG), thereby catalyzing the formation of beta-monoglucosyl-DAG (3-O-(beta-D-glucopyranosyl)-1,2-diacyl-sn-glycerol), beta-diglucosyl-DAG (3-O-(beta-D-glucopyranosyl-beta-(1-&gt;6)-D-glucopyranosyl)-1,2-diacyl-sn-glycerol) and beta-triglucosyl-DAG (3-O-(beta-D-glucopyranosyl-beta-(1-&gt;6)-D-glucopyranosyl-beta-(1-&gt;6)-D-glucopyranosyl)-1,2-diacyl-sn-glycerol). Beta-diglucosyl-DAG is the predominant glycolipid found in Bacillales and is also used as a membrane anchor for lipoteichoic acid (LTA). The sequence is that of Processive diacylglycerol beta-glucosyltransferase from Bacillus cereus (strain B4264).